Here is a 464-residue protein sequence, read N- to C-terminus: Argininosuccinate lyase (464 aa).

Belongs to the lyase 1 family. Argininosuccinate lyase subfamily.

The protein localises to the cytoplasm. It carries out the reaction 2-(N(omega)-L-arginino)succinate = fumarate + L-arginine. It participates in amino-acid biosynthesis; L-arginine biosynthesis; L-arginine from L-ornithine and carbamoyl phosphate: step 3/3. This is Argininosuccinate lyase from Desulfotalea psychrophila (strain LSv54 / DSM 12343).